We begin with the raw amino-acid sequence, 537 residues long: Phosphoenolpyruvate carboxykinase (ATP) (537 aa).

Substrate-binding residues include Arg-61, Tyr-195, and Lys-201. ATP-binding positions include Lys-201, His-220, and 236–244; that span reads GLSGTGKTT. Residues Lys-201 and His-220 each coordinate Mn(2+). Asp-257 contributes to the Mn(2+) binding site. Glu-285 is an ATP binding site. The segment covering 312 to 321 has biased composition (basic and acidic residues); that stretch reads DFNDGSKTEN. A disordered region spans residues 312 to 339; the sequence is DFNDGSKTENTRSAYPLESIPNASPTGR. Arg-323 provides a ligand contact to substrate. ATP is bound by residues Arg-323 and Thr-448.

It belongs to the phosphoenolpyruvate carboxykinase (ATP) family. Requires Mn(2+) as cofactor.

It localises to the cytoplasm. It carries out the reaction oxaloacetate + ATP = phosphoenolpyruvate + ADP + CO2. The protein operates within carbohydrate biosynthesis; gluconeogenesis. Involved in the gluconeogenesis. Catalyzes the conversion of oxaloacetate (OAA) to phosphoenolpyruvate (PEP) through direct phosphoryl transfer between the nucleoside triphosphate and OAA. The sequence is that of Phosphoenolpyruvate carboxykinase (ATP) from Rhodopseudomonas palustris (strain BisB18).